We begin with the raw amino-acid sequence, 125 residues long: Ribosome maturation factor RimP (125 aa).

Belongs to the RimP family.

The protein resides in the cytoplasm. In terms of biological role, required for maturation of 30S ribosomal subunits. The protein is Ribosome maturation factor RimP of Rickettsia canadensis (strain McKiel).